The primary structure comprises 429 residues: MTEIINVTAREILDSRGNPTIEVEVAVGTGDVGRAAVPSGASTGEHEALELRDGDKGRYLGKGVRKAIANVMDEIAPAVVGLDAGDQAVLDQRMIELDGTATKSKLGANAILGVSLAAAKAAAQAHGLPLYRYVGGAGARTLPVPLMNILNGGAHADSNVDIQEFMVVPLGAPSFAEALRYGAEVFHALKAVLKKKGAGTGVGDEGGYAPNLASNEEALALIMKAIEQAGLKAGDDVGLALDCAASEFFEKSSGKYDLEGEGKAFDGKGLVDFYASLAAKYPIVSIEDGCAEDDWATWKLLTERLGSKLQLVGDDLFVTNVTRLSRGIAEGVANSILVKVNQIGSLTETLEAVRMAHRAGYTSVMSHRSGETEDTTIADLSVACDCGQIKTGSASRTDRVAKYNQLLRIEEELGKAARYAGRDAFRALR.

Position 163 (Q163) interacts with (2R)-2-phosphoglycerate. E205 serves as the catalytic Proton donor. 3 residues coordinate Mg(2+): D242, E287, and D314. Residues K339, R368, S369, and K390 each coordinate (2R)-2-phosphoglycerate. The Proton acceptor role is filled by K339.

It belongs to the enolase family. The cofactor is Mg(2+).

The protein localises to the cytoplasm. It is found in the secreted. Its subcellular location is the cell surface. It catalyses the reaction (2R)-2-phosphoglycerate = phosphoenolpyruvate + H2O. The protein operates within carbohydrate degradation; glycolysis; pyruvate from D-glyceraldehyde 3-phosphate: step 4/5. In terms of biological role, catalyzes the reversible conversion of 2-phosphoglycerate (2-PG) into phosphoenolpyruvate (PEP). It is essential for the degradation of carbohydrates via glycolysis. The sequence is that of Enolase from Anaeromyxobacter sp. (strain Fw109-5).